A 691-amino-acid chain; its full sequence is Solute carrier organic anion transporter family member 1B1 (691 aa).

Residues 1 to 28 (MDQNQHLNKTAEAQPSENKKTRYCNGLK) lie on the Cytoplasmic side of the membrane. Residues 29–48 (MFLAALSLSFIAKTLGAIIM) traverse the membrane as a helical segment. Over 49-67 (KSSIIHIERRFEISSSLVG) the chain is Extracellular. Residues 68–88 (FIDGSFEIGNLLVIVFVSYFG) traverse the membrane as a helical segment. Residues 89-94 (SKLHRP) are Cytoplasmic-facing. A helical membrane pass occupies residues 95 to 119 (KLIGIGCFIMGIGGVLTALPHFFMG). The Extracellular segment spans residues 120–168 (YYRYSKETNINSSENSTSTLSTCLINQILSLNRASPEIVGKGCLKESGS). N130 and N134 each carry an N-linked (GlcNAc...) asparagine glycan. The chain crosses the membrane as a helical span at residues 169-197 (YMWIYVFMGNMLRGIGETPIVPLGLSYID). The Cytoplasmic segment spans residues 198–216 (DFAKEGHSSLYLGILNAIA). A helical transmembrane segment spans residues 217–237 (MIGPIIGFTLGSLFSKMYVDI). Over 238–255 (GYVDLSTIRITPTDSRWV) the chain is Extracellular. Residues 256–280 (GAWWLNFLVSGLFSIISSIPFFFLP) form a helical membrane-spanning segment. Residues 281-331 (QTPNKPQKERKASLSLHVLETNDEKDQTANLTNQGKNITKNVTGFFQSFKS) are Cytoplasmic-facing. Phosphoserine occurs at positions 293 and 295. Residues 332-353 (ILTNPLYVMFVLLTLLQVSSYI) traverse the membrane as a helical segment. Residues 354-373 (GAFTYVFKYVEQQYGQPSSK) lie on the Extracellular side of the membrane. Residues 374 to 397 (ANILLGVITIPIFASGMFLGGYII) traverse the membrane as a helical segment. Residues 398–401 (KKFK) lie on the Cytoplasmic side of the membrane. Residues 402–425 (LNTVGIAKFSCFTAVMSLSFYLLY) form a helical membrane-spanning segment. Topologically, residues 426–537 (FFILCENKSV…DACTRKFYFF (112 aa)) are extracellular. N-linked (GlcNAc...) asparagine glycosylation occurs at N432. A Kazal-like domain is found at 453–508 (DVPLSYCNSDCNCDESQWEPVCGNNGITYISPCLAGCKSSSGNKKPIVFYNCSCLE). Disulfide bonds link C459/C489, C465/C485, and C474/C506. N-linked (GlcNAc...) asparagine glycans are attached at residues N503 and N516. Residues 538–560 (VAIQVLNLFFSALGGTSHVMLIV) form a helical membrane-spanning segment. The Cytoplasmic portion of the chain corresponds to 561–569 (KIVQPELKS). A helical transmembrane segment spans residues 570-595 (LALGFHSMVIRALGGILAPIYFGALI). Residues 596 to 629 (DTTCIKWSTNNCGTRGSCRTYNSTSFSRVYLGLS) lie on the Extracellular side of the membrane. Residue N617 is glycosylated (N-linked (GlcNAc...) asparagine). The helical transmembrane segment at 630–647 (SMLRVSSLVLYIILIYAM) threads the bilayer. At 648-691 (KKKYQEKDINASENGSVMDEANLESLNKNKHFVPSAGADSETHC) the chain is on the cytoplasmic side. Phosphoserine occurs at positions 672 and 682.

Belongs to the organo anion transporter (TC 2.A.60) family. In terms of tissue distribution, highly expressed in liver, at the basolateral membranes of centrilobular hepatocytes. Expressed in liver (at protein level). Expressed in fetal liver. Not detected in heart, brain, placenta, lung, skeletal muscle, kidney, pancreas, spleen, thymus, prostate, testis, ovary, small intestine, colon and leukocyte. In testis, primarily localized to the basal membrane of Sertoli cells and weakly expressed in Leydig cells and within the tubules.

It is found in the basolateral cell membrane. Its subcellular location is the basal cell membrane. The enzyme catalyses taurocholate(out) = taurocholate(in). It catalyses the reaction dehydroepiandrosterone 3-sulfate(out) = dehydroepiandrosterone 3-sulfate(in). The catalysed reaction is estrone 3-sulfate(out) = estrone 3-sulfate(in). It carries out the reaction 3,3',5'-triiodo-L-thyronine(out) = 3,3',5'-triiodo-L-thyronine(in). The enzyme catalyses L-thyroxine(out) = L-thyroxine(in). It catalyses the reaction prostaglandin E2(out) = prostaglandin E2(in). The catalysed reaction is thromboxane B2(out) = thromboxane B2(in). It carries out the reaction 17beta-estradiol 17-O-(beta-D-glucuronate)(out) = 17beta-estradiol 17-O-(beta-D-glucuronate)(in). The enzyme catalyses leukotriene C4(out) = leukotriene C4(in). It catalyses the reaction leukotriene E4(out) = leukotriene E4(in). The catalysed reaction is (4E,15E)-bilirubin IXalpha C8-beta-D-glucuronoside(out) = (4E,15E)-bilirubin IXalpha C8-beta-D-glucuronoside(in). It carries out the reaction bilirubin IXalpha bis-beta-D-glucuronoside(out) = bilirubin IXalpha bis-beta-D-glucuronoside(in). Mediates the Na(+)-independent uptake of organic anions. Shows broad substrate specificity, can transport both organic anions such as bile acid taurocholate (cholyltaurine) and conjugated steroids (dehydroepiandrosterone 3-sulfate, 17-beta-glucuronosyl estradiol, and estrone 3-sulfate), as well as eicosanoids (prostaglandin E2, thromboxane B2, leukotriene C4, and leukotriene E4), and thyroid hormones (T4/L-thyroxine, and T3/3,3',5'-triiodo-L-thyronine). Can take up bilirubin glucuronides from plasma into the liver, contributing to the detoxification-enhancing liver-blood shuttling loop. Involved in the clearance of endogenous and exogenous substrates from the liver. Transports coproporphyrin I and III, by-products of heme synthesis, and may be involved in their hepatic disposition. May contribute to regulate the transport of organic compounds in testes across the blood-testis-barrier. Can transport HMG-CoA reductase inhibitors (also known as statins), such as pravastatin and pitavastatin, a clinically important class of hypolipidemic drugs. May play an important role in plasma and tissue distribution of the structurally diverse chemotherapeutic drug methotrexate. May also transport antihypertension agents, such as the angiotensin-converting enzyme (ACE) inhibitor prodrug enalapril, and the highly selective angiotensin II AT1-receptor antagonist valsartan, in the liver. Shows a pH-sensitive substrate specificity towards prostaglandin E2 and T4 which may be ascribed to the protonation state of the binding site and leads to a stimulation of substrate transport in an acidic microenvironment. Hydrogencarbonate/HCO3(-) acts as the probable counteranion that exchanges for organic anions. In Homo sapiens (Human), this protein is Solute carrier organic anion transporter family member 1B1 (SLCO1B1).